A 444-amino-acid polypeptide reads, in one-letter code: Tol-Pal system protein TolB (444 aa).

Residues Met1–Ala19 form the signal peptide.

It belongs to the TolB family. As to quaternary structure, the Tol-Pal system is composed of five core proteins: the inner membrane proteins TolA, TolQ and TolR, the periplasmic protein TolB and the outer membrane protein Pal. They form a network linking the inner and outer membranes and the peptidoglycan layer.

The protein resides in the periplasm. Part of the Tol-Pal system, which plays a role in outer membrane invagination during cell division and is important for maintaining outer membrane integrity. This is Tol-Pal system protein TolB from Rickettsia rickettsii (strain Iowa).